We begin with the raw amino-acid sequence, 78 residues long: MKFIVEREHLLKPLQQVSSPLGGRPTLPILGNLLLQVTEGSLLLTGTDLEMEMVARVALSQPHEPGATTVPARKFFDI.

The protein belongs to the beta sliding clamp family. As to quaternary structure, forms a ring-shaped head-to-tail homodimer around DNA which binds and tethers DNA polymerases and other proteins to the DNA. The DNA replisome complex has a single clamp-loading complex (3 tau and 1 each of delta, delta', psi and chi subunits) which binds 3 Pol III cores (1 core on the leading strand and 2 on the lagging strand) each with a beta sliding clamp dimer. Additional proteins in the replisome are other copies of gamma, psi and chi, Ssb, DNA helicase and RNA primase.

The protein localises to the cytoplasm. Confers DNA tethering and processivity to DNA polymerases and other proteins. Acts as a clamp, forming a ring around DNA (a reaction catalyzed by the clamp-loading complex) which diffuses in an ATP-independent manner freely and bidirectionally along dsDNA. Initially characterized for its ability to contact the catalytic subunit of DNA polymerase III (Pol III), a complex, multichain enzyme responsible for most of the replicative synthesis in bacteria; Pol III exhibits 3'-5' exonuclease proofreading activity. The beta chain is required for initiation of replication as well as for processivity of DNA replication. This is Beta sliding clamp (dnaN) from Serratia marcescens.